A 318-amino-acid polypeptide reads, in one-letter code: Protein FdhE homolog (318 aa).

It belongs to the FdhE family.

It localises to the cytoplasm. In terms of biological role, necessary for formate dehydrogenase activity. The sequence is that of Protein FdhE homolog from Pseudomonas putida (strain ATCC 47054 / DSM 6125 / CFBP 8728 / NCIMB 11950 / KT2440).